The following is a 418-amino-acid chain: MTENILNSPGGMRSYLDSIAFQLEEIQDRIKGVFRQWAYRPIITPTLEYYESLTTGIGEKYKKQMYKFIDYEGNILALRPEMTAPIARTVANKIDELCLPQRLSYRAPVFRYEEPQTGKNREIYQIGVELIGEKSPGADAEVIMLAVESLKSSGLTDFQIDIGHAGFLNGVIEELKVTDSQGEQIKRWLNKKDMVSIRDFTSRVEIKNINKLLGIVRLRGKKEVLQRAKRLINNDKSKKALKDLELVYEYLCDYGVDNYVNFDLTLIRGFEYYTGIVFEAFTENLGYTICGGGRYDSLIYQYCGKEIPAIGFAIGIERVRLGLLNQGQELETPEIDVMVVFSYQARKPALEAIKKYRKQGLNVLQIEKEEVDQEFIKKHLKTGVKKIISFCEYSSNQKIKVIDDRGNIELLTPGGDLP.

This sequence belongs to the class-II aminoacyl-tRNA synthetase family. HisZ subfamily. In terms of assembly, heteromultimer composed of HisG and HisZ subunits.

It is found in the cytoplasm. The protein operates within amino-acid biosynthesis; L-histidine biosynthesis; L-histidine from 5-phospho-alpha-D-ribose 1-diphosphate: step 1/9. Functionally, required for the first step of histidine biosynthesis. May allow the feedback regulation of ATP phosphoribosyltransferase activity by histidine. This is ATP phosphoribosyltransferase regulatory subunit from Halothermothrix orenii (strain H 168 / OCM 544 / DSM 9562).